We begin with the raw amino-acid sequence, 212 residues long: 7-carboxy-7-deazaguanine synthase (212 aa).

Residues 22–24 (LQG) and Arg-37 each bind substrate. One can recognise a Radical SAM core domain in the interval 28 to 212 (NTGMPAVFVR…VQTHKWAGIE (185 aa)). Cys-41, Cys-45, and Cys-48 together coordinate [4Fe-4S] cluster. Thr-50 serves as a coordination point for Mg(2+). Thr-78 contributes to the substrate binding site. Residues Gly-80 and 122–124 (SPK) each bind S-adenosyl-L-methionine.

This sequence belongs to the radical SAM superfamily. 7-carboxy-7-deazaguanine synthase family. As to quaternary structure, homodimer. Requires [4Fe-4S] cluster as cofactor. S-adenosyl-L-methionine is required as a cofactor. Mg(2+) serves as cofactor.

It catalyses the reaction 6-carboxy-5,6,7,8-tetrahydropterin + H(+) = 7-carboxy-7-deazaguanine + NH4(+). It participates in purine metabolism; 7-cyano-7-deazaguanine biosynthesis. Its function is as follows. Catalyzes the complex heterocyclic radical-mediated conversion of 6-carboxy-5,6,7,8-tetrahydropterin (CPH4) to 7-carboxy-7-deazaguanine (CDG), a step common to the biosynthetic pathways of all 7-deazapurine-containing compounds. The polypeptide is 7-carboxy-7-deazaguanine synthase (Neisseria meningitidis serogroup B (strain ATCC BAA-335 / MC58)).